A 132-amino-acid chain; its full sequence is FPRL1 inhibitory protein (132 aa).

The signal sequence occupies residues 1-28; it reads MKKNITKVIIASTVIATGLLTQTNDAKA.

Belongs to the CHIPS/FLIPr family.

Its subcellular location is the secreted. Its function is as follows. May be involved in countering the first line of host defense mechanisms. Impairs the leukocyte response to FPRL1 agonists by binding directly to host FPRL1. The sequence is that of FPRL1 inhibitory protein (flr) from Staphylococcus aureus (strain MW2).